The chain runs to 187 residues: Superoxide dismutase [Cu-Zn] (187 aa).

An N-terminal signal peptide occupies residues 1–21; sequence MSLLPTGTLILLVLFILVLIT. 3 residues coordinate Cu cation: His76, His78, and His93. A disulfide bond links Cys87 and Cys176. 4 residues coordinate Zn(2+): His93, His101, His110, and Asp113. Residue His150 coordinates Cu cation.

Belongs to the Cu-Zn superoxide dismutase family. The cofactor is Cu cation. Zn(2+) is required as a cofactor.

The enzyme catalyses 2 superoxide + 2 H(+) = H2O2 + O2. Destroys radicals which are normally produced within the cells and which are toxic to biological systems. This Chlorella (PBCV-1) protein is Superoxide dismutase [Cu-Zn].